Consider the following 539-residue polypeptide: CTP synthase (539 aa).

The amidoligase domain stretch occupies residues 1 to 267 (MTKFIFVTGG…DDLVIKRLDL (267 aa)). A CTP-binding site is contributed by serine 13. UTP is bound at residue serine 13. Position 14 to 19 (14 to 19 (SLGKGI)) interacts with ATP. Tyrosine 54 lines the L-glutamine pocket. Aspartate 71 is a binding site for ATP. Mg(2+) is bound by residues aspartate 71 and glutamate 141. CTP-binding positions include 148-150 (DIE), 188-193 (KTKPTQ), and lysine 224. UTP is bound by residues 188 to 193 (KTKPTQ) and lysine 224. 240-242 (RDA) contacts ATP. The 243-residue stretch at 293–535 (TIGLVGKYVS…IEAANKYKEA (243 aa)) folds into the Glutamine amidotransferase type-1 domain. Position 355 (glycine 355) interacts with L-glutamine. The active-site Nucleophile; for glutamine hydrolysis is the cysteine 382. L-glutamine is bound by residues 383–386 (LGMQ), glutamate 406, and arginine 463. Active-site residues include histidine 508 and glutamate 510.

The protein belongs to the CTP synthase family. In terms of assembly, homotetramer.

The catalysed reaction is UTP + L-glutamine + ATP + H2O = CTP + L-glutamate + ADP + phosphate + 2 H(+). The enzyme catalyses L-glutamine + H2O = L-glutamate + NH4(+). It carries out the reaction UTP + NH4(+) + ATP = CTP + ADP + phosphate + 2 H(+). It participates in pyrimidine metabolism; CTP biosynthesis via de novo pathway; CTP from UDP: step 2/2. With respect to regulation, allosterically activated by GTP, when glutamine is the substrate; GTP has no effect on the reaction when ammonia is the substrate. The allosteric effector GTP functions by stabilizing the protein conformation that binds the tetrahedral intermediate(s) formed during glutamine hydrolysis. Inhibited by the product CTP, via allosteric rather than competitive inhibition. Its function is as follows. Catalyzes the ATP-dependent amination of UTP to CTP with either L-glutamine or ammonia as the source of nitrogen. Regulates intracellular CTP levels through interactions with the four ribonucleotide triphosphates. This chain is CTP synthase, found in Staphylococcus carnosus (strain TM300).